The chain runs to 740 residues: N-acetylated-alpha-linked acidic dipeptidase 2 (740 aa).

Residues 1 to 7 (MARPRHL) lie on the Cytoplasmic side of the membrane. Residues 8-31 (RGLGMCITAVLASFIAGFTVGWFI) traverse the membrane as a helical; Signal-anchor for type II membrane protein segment. Residues 32 to 740 (KPLKETTTSA…AAAGTLTNVL (709 aa)) lie on the Extracellular side of the membrane. 3 N-linked (GlcNAc...) asparagine glycosylation sites follow: asparagine 111, asparagine 143, and asparagine 185. Residues arginine 200 and asparagine 247 each coordinate substrate. Ca(2+)-binding residues include threonine 259 and tyrosine 262. The NAALADase stretch occupies residues 264–577 (AKEYTFRLPV…QLRGALVYEL (314 aa)). Asparagine 314 is a glycosylation site (N-linked (GlcNAc...) asparagine). 2 residues coordinate Zn(2+): histidine 367 and aspartate 377. Glutamate 414 is a binding site for substrate. Glutamate 414 serves as the catalytic Nucleophile; for NAALADase activity. Glutamate 415 lines the Zn(2+) pocket. Positions 423 and 426 each coordinate Ca(2+). Residue aspartate 443 coordinates Zn(2+). Asparagine 449 is a glycosylation site (N-linked (GlcNAc...) asparagine). Substrate is bound by residues 507–508 (SG), 524–526 (RAR), tyrosine 542, and 542–543 (YH). Histidine 543 provides a ligand contact to Zn(2+). Residue asparagine 603 is glycosylated (N-linked (GlcNAc...) asparagine). Serine 618 (charge relay system) is an active-site residue. Asparagine 628 is a glycosylation site (N-linked (GlcNAc...) asparagine). Residues aspartate 656 and histidine 679 each act as charge relay system in the active site. 689 to 690 (KY) provides a ligand contact to substrate.

The protein belongs to the peptidase M28 family. M28B subfamily. In terms of assembly, homodimer. Zn(2+) serves as cofactor. As to expression, expressed ovary, testes and lung, but not brain.

It localises to the cell membrane. It carries out the reaction Release of an unsubstituted, C-terminal glutamyl residue, typically from Ac-Asp-Glu or folylpoly-gamma-glutamates.. Functionally, has N-acetylated-alpha-linked-acidic dipeptidase (NAALADase) activity. Also exhibits a dipeptidyl-peptidase IV type activity. Inactivates the peptide neurotransmitter N-acetylaspartylglutamate. The sequence is that of N-acetylated-alpha-linked acidic dipeptidase 2 (Naalad2) from Mus musculus (Mouse).